Consider the following 129-residue polypeptide: M-zodatoxin-Lt8k (129 aa).

An N-terminal signal peptide occupies residues 1-20 (MKYFVVALALVAAFACIAES). The propeptide occupies 21-60 (KPAESEHELAEVEEENELADLEDAVWLEHLADLSDLEEAR).

It belongs to the cationic peptide 06 (cytoinsectotoxin) family. As to expression, expressed by the venom gland.

The protein resides in the secreted. Functionally, insecticidal, cytolytic and antimicrobial peptide. Forms voltage-dependent, ion-permeable channels in membranes. At high concentration causes cell membrane lysis. The polypeptide is M-zodatoxin-Lt8k (cit 1-10) (Lachesana tarabaevi (Spider)).